The following is a 154-amino-acid chain: 6,7-dimethyl-8-ribityllumazine synthase (154 aa).

Residues 22-23, 56-58, and 80-82 each bind 5-amino-6-(D-ribitylamino)uracil; these read FN, AFE, and TVI. 85–86 lines the (2S)-2-hydroxy-3-oxobutyl phosphate pocket; sequence AT. The active-site Proton donor is His-88. 5-amino-6-(D-ribitylamino)uracil is bound at residue Phe-113. Residue Arg-127 participates in (2S)-2-hydroxy-3-oxobutyl phosphate binding.

Belongs to the DMRL synthase family. As to quaternary structure, forms an icosahedral capsid composed of 60 subunits, arranged as a dodecamer of pentamers. Can interact with riboflavin synthase, forming a lumazine synthase/riboflavin synthase complex, also designated as 'heavy riboflavin synthase complex', which consists of a trimer of riboflavin synthase enclosed within the icosahedral structure composed of 60 subunits of 6,7-dimethyl-8-ribityllumazine synthase.

The enzyme catalyses (2S)-2-hydroxy-3-oxobutyl phosphate + 5-amino-6-(D-ribitylamino)uracil = 6,7-dimethyl-8-(1-D-ribityl)lumazine + phosphate + 2 H2O + H(+). Its pathway is cofactor biosynthesis; riboflavin biosynthesis; riboflavin from 2-hydroxy-3-oxobutyl phosphate and 5-amino-6-(D-ribitylamino)uracil: step 1/2. Its function is as follows. Catalyzes the formation of 6,7-dimethyl-8-ribityllumazine by condensation of 5-amino-6-(D-ribitylamino)uracil with 3,4-dihydroxy-2-butanone 4-phosphate. This is the penultimate step in the biosynthesis of riboflavin. Is able to use the non-natural R enantiomer of 3,4-dihydroxy-2-butanone 4-phosphate as a substrate, but with less efficiency than the natural S enantiomer. Cannot use unphosphorylated 3,4-dihydroxy-2-butanone, 3,4-dihydroxy-2-butanone 3-phosphate or diacetyl as substrates. The sequence is that of 6,7-dimethyl-8-ribityllumazine synthase (ribH) from Bacillus subtilis (strain 168).